The chain runs to 289 residues: MNKQQLKAYFMLMRLHRPIPILLILWPTLTALVLASHGLPDISYLVIFTIGVVVMRTVGCIINDIADVDFDKHVARTNTRPLTSGQLSIKNAIWLCISLTLVAFICVLFLNLYTILLSFVALFLAILYPFCKRFFAIPQLILGLAFNFGIFMAFSAIQNQIPVEAWIFYIATICWTIAYDTIYALADREFDLEIGIKSSAVLFGNKVFRYILLFNFLSLLLLIILGIYCDFNSFFYLGVVICSLFFVRNYFLYKKLGITNCINAFSANHWIGLIIFIIAVIQYIIKEFL.

The next 9 helical transmembrane spans lie at 19–39 (IPIL…SHGL), 42–62 (ISYL…GCII), 85–105 (GQLS…VAFI), 107–127 (VLFL…LAIL), 134–154 (FFAI…FMAF), 165–185 (AWIF…IYAL), 211–231 (ILLF…YCDF), 233–253 (SFFY…YFLY), and 265–285 (FSAN…QYII).

The protein belongs to the UbiA prenyltransferase family. Mg(2+) is required as a cofactor.

The protein localises to the cell inner membrane. It carries out the reaction all-trans-octaprenyl diphosphate + 4-hydroxybenzoate = 4-hydroxy-3-(all-trans-octaprenyl)benzoate + diphosphate. The protein operates within cofactor biosynthesis; ubiquinone biosynthesis. Its function is as follows. Catalyzes the prenylation of para-hydroxybenzoate (PHB) with an all-trans polyprenyl group. Mediates the second step in the final reaction sequence of ubiquinone-8 (UQ-8) biosynthesis, which is the condensation of the polyisoprenoid side chain with PHB, generating the first membrane-bound Q intermediate 3-octaprenyl-4-hydroxybenzoate. This chain is 4-hydroxybenzoate octaprenyltransferase, found in Francisella tularensis subsp. holarctica (strain FTNF002-00 / FTA).